A 412-amino-acid polypeptide reads, in one-letter code: cAMP-dependent protein kinase regulatory subunit (412 aa).

A compositionally biased stretch (polar residues) spans 1 to 11 (MSNYSHSSNNP). A disordered region spans residues 1–146 (MSNYSHSSNN…TPPSHPKSEE (146 aa)). Positions 16–29 (STKEDKPSSFHKIA) are enriched in basic and acidic residues. Residues 23-159 (SSFHKIAEDE…RLKTAVSNNF (137 aa)) are dimerization and phosphorylation. Composition is skewed to polar residues over residues 49-60 (NADNSAGGNNPL) and 119-138 (TSVS…SWTP). A Phosphoserine modification is found at serine 120. 3',5'-cyclic AMP contacts are provided by residues 160–291 (LFSH…EEVP), glutamate 238, arginine 247, 292–405 (LLSS…TEYS), glutamate 359, and arginine 368.

It belongs to the cAMP-dependent kinase regulatory chain family. As to quaternary structure, tetramer, composed of 2 regulatory (R) and 2 catalytic (C) subunits. In the presence of cAMP it dissociates into 2 active monomeric C subunits and an R dimer.

This chain is cAMP-dependent protein kinase regulatory subunit (pkaR), found in Emericella nidulans (strain FGSC A4 / ATCC 38163 / CBS 112.46 / NRRL 194 / M139) (Aspergillus nidulans).